We begin with the raw amino-acid sequence, 32 residues long: Snake venom serine proteinase (32 aa).

The Peptidase S1 domain occupies 1–32 (VIGGDECDINEHRFLVFLTXASGLACGGTLIN).

Belongs to the peptidase S1 family. Snake venom subfamily. As to quaternary structure, monomer. In terms of processing, contains 6 disulfide bonds. Glycosylated. As to expression, expressed by the venom gland.

It localises to the secreted. Functionally, cleaves a kininogen analog with the release of kallidin (lysyl-bradykinin). Completely cleaves fibrinogen Aalpha chain, partially cleaves Bbeta chain and has no activity on gamma chain. The protein is Snake venom serine proteinase of Bitis arietans (African puff adder).